Reading from the N-terminus, the 449-residue chain is Procollagen C-endopeptidase enhancer 1 (449 aa).

The first 25 residues, 1 to 25 (MLPAATASLLGPLLTACALLPFAQG), serve as a signal peptide directing secretion. N-linked (GlcNAc...) asparagine glycosylation is present at asparagine 29. Intrachain disulfides connect cysteine 37–cysteine 63, cysteine 90–cysteine 112, cysteine 159–cysteine 186, cysteine 213–cysteine 236, cysteine 318–cysteine 386, cysteine 322–cysteine 389, and cysteine 333–cysteine 437. 2 consecutive CUB domains span residues 37–149 (CGGD…YSGR) and 159–273 (CGGR…YKTL). Residue serine 50 is modified to Phosphoserine. A disordered region spans residues 271–321 (KTLPRGTAKEGQGPGPKRGTEPKVKLPPKSQPPEKTEESPSAPDAPTCPKQ). In terms of domain architecture, NTR spans 318-437 (CPKQCRRTGT…ILTNLSKRKC (120 aa)). A glycan (N-linked (GlcNAc...) asparagine) is linked at asparagine 431.

Interacts with EFEMP2. Post-translationally, C-terminally processed at multiple positions.

It is found in the secreted. Binds to the C-terminal propeptide of type I procollagen and enhances procollagen C-proteinase activity. In terms of biological role, C-terminal processed part of PCPE (CT-PCPE) may have an metalloproteinase inhibitory activity. The protein is Procollagen C-endopeptidase enhancer 1 (PCOLCE) of Homo sapiens (Human).